The following is a 462-amino-acid chain: UDP-N-acetylmuramoylalanine--D-glutamate ligase (462 aa).

Position 118–124 (118–124 (GTNGKST)) interacts with ATP.

The protein belongs to the MurCDEF family.

The protein resides in the cytoplasm. The enzyme catalyses UDP-N-acetyl-alpha-D-muramoyl-L-alanine + D-glutamate + ATP = UDP-N-acetyl-alpha-D-muramoyl-L-alanyl-D-glutamate + ADP + phosphate + H(+). It functions in the pathway cell wall biogenesis; peptidoglycan biosynthesis. Its function is as follows. Cell wall formation. Catalyzes the addition of glutamate to the nucleotide precursor UDP-N-acetylmuramoyl-L-alanine (UMA). The polypeptide is UDP-N-acetylmuramoylalanine--D-glutamate ligase (Anaeromyxobacter dehalogenans (strain 2CP-C)).